The following is a 114-amino-acid chain: Large ribosomal subunit protein uL24 (114 aa).

The protein belongs to the universal ribosomal protein uL24 family. As to quaternary structure, part of the 50S ribosomal subunit.

In terms of biological role, one of two assembly initiator proteins, it binds directly to the 5'-end of the 23S rRNA, where it nucleates assembly of the 50S subunit. One of the proteins that surrounds the polypeptide exit tunnel on the outside of the subunit. The chain is Large ribosomal subunit protein uL24 from Thermomicrobium roseum (strain ATCC 27502 / DSM 5159 / P-2).